The following is a 147-amino-acid chain: Hordoindoline-B2 (147 aa).

The signal sequence occupies residues 1–19 (MKTLFLLALLALVASTTSA). Residues 20-28 (QYSVGGGYN) constitute a propeptide that is removed on maturation.

In terms of processing, five disulfide bonds are present. In terms of tissue distribution, found in endosperm and aleurone layer of developing kernels, but not in the embryo.

It localises to the membrane. Its subcellular location is the secreted. The protein localises to the extracellular space. Its function is as follows. Acts as a membranotoxin, probably through its antibacterial and antifungal activities, contributing to the defense mechanism of the plant against predators. Forms monovalent cation-selective ion channels in membranes. Contributes to grain texture and hardness. The sequence is that of Hordoindoline-B2 (HINB-2) from Hordeum vulgare (Barley).